A 568-amino-acid chain; its full sequence is Phosphoprotein (568 aa).

Residues 1 to 23 form a disordered region; the sequence is MDQDALISKEDSEVEREASGGRE. Residues 7–20 show a composition bias toward basic and acidic residues; it reads ISKEDSEVEREASG. An N0 binding region spans residues 33–41; the sequence is DAVLSSEPT. Residues 54 to 317 are disordered; sequence INTLQRPGST…SPETDATKKG (264 aa). 3 stretches are compositionally biased toward basic and acidic residues: residues 99–110, 150–168, and 175–193; these read AEAHARNVDKQN, GAED…RGED, and EEIR…RADN. Phosphoserine; by host is present on residues S249, S257, and S260. The multimerization stretch occupies residues 344 to 411; it reads FESSRDASYV…SFRDIYKRFS (68 aa). Residues 364–429 adopt a coiled-coil conformation; it reads YAEMAFNVCG…LLMSNLSTLH (66 aa). Residues 412 to 445 are l protein binding; sequence EYQKEQNSLLMSNLSTLHIITDRGGKTDNPDSPT. Residues 433–462 form a disordered region; that stretch reads DRGGKTDNPDSPTRSPSVFAKTKENKTKAT. Phosphoserine; by host occurs at positions 447 and 449. A compositionally biased stretch (basic and acidic residues) spans 453 to 462; the sequence is KTKENKTKAT. Residues 479-568 are interaction with the nucleocapsid (N-RNA); it reads DLLREDEFRE…VEEDIESLTN (90 aa).

This sequence belongs to the respirovirus P protein family. Homotetramer. Interacts (via multimerization domain) with polymerase L; this interaction forms the polymerase complex. Interacts (via N-terminus) with N0; this interaction allows P to chaperon N0 before encapsidation and form the N-P complex. Interacts (via C-terminus) with N-RNA template; this interaction positions the polymerase on the template. Phosphorylated by PKC/PRKCZ, and other unknown kinases. Phosphorylation is necessary for viral transcription and replication. The N-terminus contains the majority of phosphorylated sites. Ser-249 is the major site of phosphorylation, but is not necessary for most functions.

It localises to the host cytoplasm. Essential cofactor of the RNA polymerase L that plays a central role in the transcription and replication by forming the polymerase complex with RNA polymerase L and recruiting L to the genomic N-RNA template for RNA synthesis. Also plays a central role in the encapsidation of nascent RNA chains by forming the encapsidation complex with the nucleocapsid protein N (N-P complex). Acts as a chaperone for newly synthesized free N protein, so-called N0, allowing encapsidation of nascent RNA chains during replication. The nucleoprotein protein N prevents excessive phosphorylation of P, which leads to down-regulation of viral transcription/ replication. Participates, together with N, in the formation of viral factories (viroplasms), which are large inclusions in the host cytoplasm where replication takes place. Recruits host PI4KB and remodel the host endoplasmic reticulum membrane to form viral replication factories. This Sendai virus (strain Ohita) (SeV) protein is Phosphoprotein (P/V/C).